A 221-amino-acid polypeptide reads, in one-letter code: Transcription antitermination protein NusB (221 aa).

It belongs to the NusB family.

In terms of biological role, involved in transcription antitermination. Required for transcription of ribosomal RNA (rRNA) genes. Binds specifically to the boxA antiterminator sequence of the ribosomal RNA (rrn) operons. In Synechocystis sp. (strain ATCC 27184 / PCC 6803 / Kazusa), this protein is Transcription antitermination protein NusB.